A 98-amino-acid chain; its full sequence is Lactococcin-A immunity protein (98 aa).

In terms of biological role, imparts immunity to lactococcin-A to naturally sensitive host strains. In Lactococcus lactis subsp. cremoris (Streptococcus cremoris), this protein is Lactococcin-A immunity protein (lciA).